We begin with the raw amino-acid sequence, 1024 residues long: SAC3 family protein 1 (1024 aa).

Positions 1–62 (MEKRNETGNN…QDSRQKRFSS (62 aa)) are disordered. Positions 11–21 (RLKRSNNRGKS) are enriched in basic residues. Positions 22-38 (KKDWKDASVETTPRETS) are enriched in basic and acidic residues. Over residues 39-52 (VDEDNTSVFEDVEA) the composition is skewed to acidic residues. Positions 243–433 (EVEQLRKGIL…NKTAFFNDSK (191 aa)) constitute a PCI domain. Ser841 carries the post-translational modification Phosphoserine. The stretch at 945–1022 (AQLEELEVVR…ARDLLKKVET (78 aa)) forms a coiled coil.

This sequence belongs to the SAC3 family.

Its subcellular location is the cytoplasm. It is found in the nucleus envelope. This chain is SAC3 family protein 1, found in Schizosaccharomyces pombe (strain 972 / ATCC 24843) (Fission yeast).